The chain runs to 450 residues: Glucose-6-phosphate isomerase (450 aa).

Residue threonine 39 is modified to Phosphothreonine. The active-site Proton donor is glutamate 291. Catalysis depends on residues histidine 312 and lysine 426.

It belongs to the GPI family.

The protein localises to the cytoplasm. It catalyses the reaction alpha-D-glucose 6-phosphate = beta-D-fructose 6-phosphate. It functions in the pathway carbohydrate biosynthesis; gluconeogenesis. It participates in carbohydrate degradation; glycolysis; D-glyceraldehyde 3-phosphate and glycerone phosphate from D-glucose: step 2/4. Its function is as follows. Catalyzes the reversible isomerization of glucose-6-phosphate to fructose-6-phosphate. The sequence is that of Glucose-6-phosphate isomerase from Bacillus cytotoxicus (strain DSM 22905 / CIP 110041 / 391-98 / NVH 391-98).